Here is a 1794-residue protein sequence, read N- to C-terminus: Non-reducing polyketide synthase nscA (1794 aa).

The tract at residues 19 to 256 (DLKDLFRRLH…PLPVYDGLCH (238 aa)) is N-terminal acylcarrier protein transacylase domain (SAT). A Ketosynthase family 3 (KS3) domain is found at 389 to 822 (ASKLAIVGMA…GGNTTVLLED (434 aa)). Positions 428 to 440 (DRFDLNTHYDPTG) are enriched in basic and acidic residues. The tract at residues 428–448 (DRFDLNTHYDPTGKTENATQT) is disordered. Active-site for beta-ketoacyl synthase activity residues include Cys-562, His-697, and His-740. The tract at residues 927-1230 (TFTGQGAYYS…SVISSCRRNE (304 aa)) is malonyl-CoA:ACP transacylase (MAT) domain. Residues 1314–1633 (TSLVHQITTE…RLLMDRFFSP (320 aa)) form a product template (PT) domain region. The segment at 1318-1454 (HQITTETVEA…CVVRFEDPAA (137 aa)) is N-terminal hotdog fold. A PKS/mFAS DH domain is found at 1318–1628 (HQITTETVEA…FRRVPRLLMD (311 aa)). Catalysis depends on His-1350, which acts as the Proton acceptor; for dehydratase activity. The tract at residues 1482-1628 (ASKLSKPLAY…FRRVPRLLMD (147 aa)) is C-terminal hotdog fold. Asp-1539 functions as the Proton donor; for dehydratase activity in the catalytic mechanism. The tract at residues 1637 to 1719 (SHTEKQLQET…ATSDRGDSTD (83 aa)) is disordered. Residues 1644–1655 (QETAPSATNVKK) are compositionally biased toward polar residues. One can recognise a Carrier domain in the interval 1717 to 1794 (STDAGVVGQC…EMTAWLEEYC (78 aa)). At Ser-1754 the chain carries O-(pantetheine 4'-phosphoryl)serine.

Pantetheine 4'-phosphate serves as cofactor.

Its pathway is secondary metabolite biosynthesis. Non-reducing polyketide synthase; part of the gene cluster that mediates the biosynthesis of neosartoricin, a prenylated anthracenone that exhibits T-cell antiproliferative activity, suggestive of a physiological role as an immunosuppressive agent. The non-reducing polyketide synthase nscA probably synthesizes and cyclizes the decaketide backbone. The hydrolase nscB then mediates the product release through hydrolysis followed by spontaneous decarboxylation. The prenyltransferase nscD catalyzes the addition of the dimethylallyl group to the aromatic C5. The FAD-dependent monooxygenase nscC is then responsible for the stereospecific hydroxylation at C2. There is no gene encoding O-acetyltransferase in the nsc gene cluster; thus, the last step of 2-O-acetylation leading to neosartoricin may be catalyzed by an unidentified O-acetyltransferase. This Aspergillus fumigatus (strain ATCC MYA-4609 / CBS 101355 / FGSC A1100 / Af293) (Neosartorya fumigata) protein is Non-reducing polyketide synthase nscA.